The sequence spans 447 residues: Cysteine--tRNA ligase (447 aa).

Cysteine 28 contributes to the Zn(2+) binding site. Positions 30 to 40 (PTVYNYIHVGN) match the 'HIGH' region motif. Residues cysteine 211, histidine 236, and glutamate 240 each contribute to the Zn(2+) site. A 'KMSKS' region motif is present at residues 268 to 272 (KMSKS). Lysine 271 lines the ATP pocket.

This sequence belongs to the class-I aminoacyl-tRNA synthetase family. Monomer. The cofactor is Zn(2+).

The protein localises to the cytoplasm. It carries out the reaction tRNA(Cys) + L-cysteine + ATP = L-cysteinyl-tRNA(Cys) + AMP + diphosphate. This is Cysteine--tRNA ligase from Streptococcus pneumoniae (strain ATCC BAA-255 / R6).